A 256-amino-acid chain; its full sequence is Alcohol dehydrogenase (256 aa).

NAD(+) is bound at residue 12-35; the sequence is FVAGLGGIGLDTSKELVKRDLKNL. Serine 140 provides a ligand contact to substrate. Tyrosine 153 acts as the Proton acceptor in catalysis.

It belongs to the short-chain dehydrogenases/reductases (SDR) family. Homodimer.

The catalysed reaction is a primary alcohol + NAD(+) = an aldehyde + NADH + H(+). It carries out the reaction a secondary alcohol + NAD(+) = a ketone + NADH + H(+). The chain is Alcohol dehydrogenase (Adh) from Drosophila mauritiana (Fruit fly).